Here is a 417-residue protein sequence, read N- to C-terminus: Serine/threonine transporter SstT (417 aa).

The next 8 helical transmembrane spans lie at 21-41 (ILAG…VAKM), 49-69 (FISA…MASI), 83-103 (ILVL…VASF), 142-162 (ALIN…GLAL), 193-213 (IGIF…ALAG), 218-238 (LLVL…LIVF), 291-311 (IPLG…ILTL), and 331-351 (LVAA…LLLI).

Belongs to the dicarboxylate/amino acid:cation symporter (DAACS) (TC 2.A.23) family.

It localises to the cell inner membrane. It catalyses the reaction L-serine(in) + Na(+)(in) = L-serine(out) + Na(+)(out). The enzyme catalyses L-threonine(in) + Na(+)(in) = L-threonine(out) + Na(+)(out). Involved in the import of serine and threonine into the cell, with the concomitant import of sodium (symport system). The protein is Serine/threonine transporter SstT of Proteus mirabilis (strain HI4320).